We begin with the raw amino-acid sequence, 844 residues long: MAVKRFYKTFHPEHYDLRINVNRKNKTINGTSTITGDVFENPVLINQKFMTIDSVKVDGKNVDFDVIEKDEAIKIKTGVTGKAVIEIAYSAPLTDTMMGIYPSYYELEGKKKQIIGTQFETTFARQAFPCVDEPEAKATFSLALKWDEQDGEVALANMPEVEVDKDGYHHFEETVRMSSYLVAFAFGELQSKTTHTKDGVLIGVYATKAHKPKELDFALDIAKRAIEFYEEFYQTKYPLPQSLQLALPDFSAGAMENWGLVTYREAYLLLDPDNTSLEMKKLVATVITHELAHQWFGDLVTMKWWDNLWLNESFANMMEYLSVDGLEPDWHIWEMFQTSEASSALNRDATDGVQPIQMEINDPADIDSVFDSAIVYAKGSRMLVMVRSLLGDDALRKGLKYYFDHHKFGNATGDDLWDALSTATDLDIGKIMHSWLKQPGYPVVNAFVAEDGHLKLTQKQFFIGEGEDKGRQWQIPLNANFDAPKIMSDKEIDLGSYKVLREEAGHPLRLNVGNNSHFIVEYDKTLHDDILSDVNELDPIDKLQLLQDLRLLAEGKQISYASIVPLLVKFADSKSSLVINALYTTAAKLRQFVEPESNEEKNLKKLYDLLSKDQVARLGWEVKPGESDEDVQIRPYELSASLYAENADSIKAAHQIFTENEDNLEALNADIRPYVLINEVKNFGNAELVDKLIKEYQRTADPSYKVDLRSAVTSTKDLAAIKAIVGDFENADVVKPQDLCDWYRGLLANHYGQQAAWDWIREDWDWLDKTVGGDMEFAKFITVTAGVFHTPERLKEFKEFFEPKINVPLLSREIKMDVKVIESKVNLIEAEKDAVNDAVAKAID.

Substrate-binding positions include Glu-120 and 253–257; that span reads GAMEN. His-289 lines the Zn(2+) pocket. The active-site Proton acceptor is Glu-290. Zn(2+)-binding residues include His-293 and Glu-312.

This sequence belongs to the peptidase M1 family. Monomer. Requires Zn(2+) as cofactor.

Its subcellular location is the cytoplasm. The enzyme catalyses Release of an N-terminal amino acid, Xaa-|-Yaa- from a peptide, amide or arylamide. Xaa is preferably Ala, but may be most amino acids including Pro (slow action). When a terminal hydrophobic residue is followed by a prolyl residue, the two may be released as an intact Xaa-Pro dipeptide.. Its function is as follows. Aminopeptidase N is involved in the degradation of intracellular peptides generated by protein breakdown during normal growth as well as in response to nutrient starvation. The protein is Aminopeptidase N (pepN) of Lactobacillus helveticus (Lactobacillus suntoryeus).